A 389-amino-acid chain; its full sequence is Phosphopentomutase (389 aa).

Mn(2+) contacts are provided by Asp10, Asp282, His287, Asp323, His324, and His335.

It belongs to the phosphopentomutase family. Requires Mn(2+) as cofactor.

The protein localises to the cytoplasm. It catalyses the reaction 2-deoxy-alpha-D-ribose 1-phosphate = 2-deoxy-D-ribose 5-phosphate. The catalysed reaction is alpha-D-ribose 1-phosphate = D-ribose 5-phosphate. It functions in the pathway carbohydrate degradation; 2-deoxy-D-ribose 1-phosphate degradation; D-glyceraldehyde 3-phosphate and acetaldehyde from 2-deoxy-alpha-D-ribose 1-phosphate: step 1/2. In terms of biological role, isomerase that catalyzes the conversion of deoxy-ribose 1-phosphate (dRib-1-P) and ribose 1-phosphate (Rib-1-P) to deoxy-ribose 5-phosphate (dRib-5-P) and ribose 5-phosphate (Rib-5-P), respectively. This chain is Phosphopentomutase, found in Clostridium kluyveri (strain NBRC 12016).